Here is a 417-residue protein sequence, read N- to C-terminus: Serine--tRNA ligase (417 aa).

An L-serine-binding site is contributed by Thr226–Glu228. Residues Arg257–Glu259 and Val273 contribute to the ATP site. Position 280 (Glu280) interacts with L-serine. Glu344 to Ser347 lines the ATP pocket. Thr379 contacts L-serine.

Belongs to the class-II aminoacyl-tRNA synthetase family. Type-1 seryl-tRNA synthetase subfamily. As to quaternary structure, homodimer. The tRNA molecule binds across the dimer.

The protein localises to the cytoplasm. The enzyme catalyses tRNA(Ser) + L-serine + ATP = L-seryl-tRNA(Ser) + AMP + diphosphate + H(+). It catalyses the reaction tRNA(Sec) + L-serine + ATP = L-seryl-tRNA(Sec) + AMP + diphosphate + H(+). Its pathway is aminoacyl-tRNA biosynthesis; selenocysteinyl-tRNA(Sec) biosynthesis; L-seryl-tRNA(Sec) from L-serine and tRNA(Sec): step 1/1. In terms of biological role, catalyzes the attachment of serine to tRNA(Ser). Is also able to aminoacylate tRNA(Sec) with serine, to form the misacylated tRNA L-seryl-tRNA(Sec), which will be further converted into selenocysteinyl-tRNA(Sec). The polypeptide is Serine--tRNA ligase (Tropheryma whipplei (strain Twist) (Whipple's bacillus)).